The chain runs to 248 residues: Probable transcriptional regulatory protein Plav_2114 (248 aa).

It belongs to the TACO1 family.

The protein resides in the cytoplasm. The polypeptide is Probable transcriptional regulatory protein Plav_2114 (Parvibaculum lavamentivorans (strain DS-1 / DSM 13023 / NCIMB 13966)).